A 323-amino-acid chain; its full sequence is Sphingomyelinase D (323 aa).

Positions 1–20 (MISLLRLCSFLAAGSILVQG) are cleaved as a signal peptide. His59 is an active-site residue. Residues Glu79, Asp81, and Asp127 each coordinate Mg(2+). The SMD-tail signature appears at 308–315 (ATNDDNPW).

It belongs to the sphingomyelinase D/phospholipase D family. Mg(2+) is required as a cofactor.

The protein resides in the secreted. It catalyses the reaction a sphingomyelin + H2O = an N-acylsphing-4-enine 1-phosphate + choline + H(+). Functionally, catalyzes the hydrolysis of sphingomyelin. Sphingomyelinases D are produced by some spider in their venoms, but also by arthropods such as ticks, or pathogenic bacteria and fungi. They might play a role in pathogenicity through different mechanisms, such as membrane destabilization and host cell penetration, but also pulmonary inflammation and cutaneous lesions. The polypeptide is Sphingomyelinase D (Trichophyton rubrum (strain ATCC MYA-4607 / CBS 118892) (Athlete's foot fungus)).